A 322-amino-acid polypeptide reads, in one-letter code: RING finger protein 113B (322 aa).

Positions Lys-24–Val-92 are disordered. Over residues Ser-46–Pro-60 the composition is skewed to low complexity. A C3H1-type zinc finger spans residues Asp-190–Ser-218. Residues Cys-256 to Asp-294 form an RING-type zinc finger.

The polypeptide is RING finger protein 113B (RNF113B) (Homo sapiens (Human)).